We begin with the raw amino-acid sequence, 204 residues long: Ciliary microtubule inner protein 7 (204 aa).

Its subcellular location is the cell projection. The protein resides in the cilium. This Homo sapiens (Human) protein is Ciliary microtubule inner protein 7.